A 1002-amino-acid chain; its full sequence is SIT4-associating protein SAP155 (1002 aa).

5 disordered regions span residues 51 to 131 (GTSD…APMM), 214 to 273 (QQQL…ANED), 609 to 645 (EQLK…ESDY), 868 to 901 (DNTT…GGGQ), and 940 to 1002 (NTEN…YDHE). Serine 58 carries the phosphoserine modification. Basic and acidic residues predominate over residues 62-97 (EYSHGDEVKTARGDQKSRFEKDDQQERYEKEEEERS). Residues 98 to 114 (MNSSESSTTSFSSGSTS) are compositionally biased toward low complexity. Acidic residues predominate over residues 220–241 (SSQEDVYVESDTEQEEEKEDDN). Position 255 is a phosphoserine (serine 255). Residues 262-273 (NNNDDDDDANED) show a composition bias toward acidic residues. Basic and acidic residues predominate over residues 609 to 626 (EQLKTKHSPTRDTDHDLK). A phosphothreonine mark is found at threonine 613 and threonine 618. Residues 635 to 645 (DNNDNDDESDY) show a composition bias toward acidic residues. Polar residues predominate over residues 868 to 885 (DNTTVLTPNGDASNNNEI). Residues 956 to 976 (SNSNINNTNHNSNNSNNNDNN) show a composition bias toward low complexity. A compositionally biased stretch (acidic residues) spans 991–1002 (EDADNDNDYDHE).

This sequence belongs to the SAPS family. As to quaternary structure, associates with the SIT4 protein phosphatase catalytic subunit in a cell-cycle-dependent manner. Post-translationally, hyperphosphorylated in the absence of SIT4.

It is found in the cytoplasm. Positive regulator of protein phosphatase SIT4. Involved in directing expression of TOR-repressed genes and in dephosphorylation of NPR1 in response to nutrient starvation. Negatively modulates K(+) efflux of the cell by the Na(+)-K(+)/H(+) antiporter NHA1. This is SIT4-associating protein SAP155 (SAP155) from Saccharomyces cerevisiae (strain ATCC 204508 / S288c) (Baker's yeast).